We begin with the raw amino-acid sequence, 362 residues long: MNKLALYCRMGFEREMAAEITDKAAEKGVFGFVRVIENSGYVIFECYQADEADYLARELDFQQLIFARQMLVVSDLLTDLPQQDRITPIVQQYQQIADKIDLKQSTELLVETADTNEAKELLGFCRKFTVPLRQTLKKQGWLRASNHAKCGLFLHLFFLRNNACYVGYSYNHNHSAHLMGIQRLKFPADAPSRSTLKLEEAILTFIPRQKETEWLNENQYAVDLGACPGGWTYQLVKRGLFVYAVDHGKMAASLHETGRIEHCAEDGFKFQPPKRQKIDWLVCDMVEKPSRIAELMTKWLLNGWCHSMIFNLKLPMKKRYAEVQQCLQYIADKLTQRGLAFQLKAKHLYHDREEITVYLRLL.

Residues serine 194, 227 to 230, aspartate 246, aspartate 266, and aspartate 284 each bind S-adenosyl-L-methionine; that span reads CPGG. The Proton acceptor role is filled by lysine 313.

It belongs to the class I-like SAM-binding methyltransferase superfamily. RNA methyltransferase RlmE family. RlmM subfamily. As to quaternary structure, monomer.

The protein resides in the cytoplasm. The catalysed reaction is cytidine(2498) in 23S rRNA + S-adenosyl-L-methionine = 2'-O-methylcytidine(2498) in 23S rRNA + S-adenosyl-L-homocysteine + H(+). In terms of biological role, catalyzes the 2'-O-methylation at nucleotide C2498 in 23S rRNA. The sequence is that of Ribosomal RNA large subunit methyltransferase M from Aggregatibacter aphrophilus (strain NJ8700) (Haemophilus aphrophilus).